A 346-amino-acid chain; its full sequence is Biotin synthase (346 aa).

A Radical SAM core domain is found at 38-256 (KQIQVSTLLS…IAVARIMMPT (219 aa)). Residues Cys53, Cys57, and Cys60 each coordinate [4Fe-4S] cluster. [2Fe-2S] cluster is bound by residues Cys97, Cys128, Cys188, and Arg260.

The protein belongs to the radical SAM superfamily. Biotin synthase family. As to quaternary structure, homodimer. [4Fe-4S] cluster serves as cofactor. It depends on [2Fe-2S] cluster as a cofactor.

It catalyses the reaction (4R,5S)-dethiobiotin + (sulfur carrier)-SH + 2 reduced [2Fe-2S]-[ferredoxin] + 2 S-adenosyl-L-methionine = (sulfur carrier)-H + biotin + 2 5'-deoxyadenosine + 2 L-methionine + 2 oxidized [2Fe-2S]-[ferredoxin]. It functions in the pathway cofactor biosynthesis; biotin biosynthesis; biotin from 7,8-diaminononanoate: step 2/2. Its function is as follows. Catalyzes the conversion of dethiobiotin (DTB) to biotin by the insertion of a sulfur atom into dethiobiotin via a radical-based mechanism. The polypeptide is Biotin synthase (Salmonella arizonae (strain ATCC BAA-731 / CDC346-86 / RSK2980)).